The sequence spans 237 residues: Opacity protein opA57 (237 aa).

Ala-1 is a signal peptide.

It belongs to the opacity porin family.

It is found in the cell outer membrane. In terms of biological role, implicated in a number of adherence functions. OPA proteins are implicated in pathogenesis and are subject to phase variation. The chain is Opacity protein opA57 (opaK) from Neisseria gonorrhoeae.